We begin with the raw amino-acid sequence, 450 residues long: 3-phosphoshikimate 1-carboxyvinyltransferase (450 aa).

Positions 28, 29, and 33 each coordinate 3-phosphoshikimate. Lys-28 provides a ligand contact to phosphoenolpyruvate. 2 residues coordinate phosphoenolpyruvate: Gly-100 and Arg-128. Positions 173, 175, 326, and 353 each coordinate 3-phosphoshikimate. Gln-175 contributes to the phosphoenolpyruvate binding site. Asp-326 (proton acceptor) is an active-site residue. Phosphoenolpyruvate contacts are provided by Arg-357 and Arg-402.

It belongs to the EPSP synthase family. Monomer.

The protein resides in the cytoplasm. It carries out the reaction 3-phosphoshikimate + phosphoenolpyruvate = 5-O-(1-carboxyvinyl)-3-phosphoshikimate + phosphate. Its pathway is metabolic intermediate biosynthesis; chorismate biosynthesis; chorismate from D-erythrose 4-phosphate and phosphoenolpyruvate: step 6/7. In terms of biological role, catalyzes the transfer of the enolpyruvyl moiety of phosphoenolpyruvate (PEP) to the 5-hydroxyl of shikimate-3-phosphate (S3P) to produce enolpyruvyl shikimate-3-phosphate and inorganic phosphate. This chain is 3-phosphoshikimate 1-carboxyvinyltransferase, found in Brucella melitensis biotype 1 (strain ATCC 23456 / CCUG 17765 / NCTC 10094 / 16M).